The sequence spans 572 residues: Urease subunit alpha (572 aa).

The Urease domain maps to 134-572 (GGIDSHIHFI…LPLAQRYFLF (439 aa)). Ni(2+)-binding residues include histidine 139, histidine 141, and lysine 222. The residue at position 222 (lysine 222) is an N6-carboxylysine. Histidine 224 contacts substrate. Histidine 251 and histidine 277 together coordinate Ni(2+). Catalysis depends on histidine 325, which acts as the Proton donor. Aspartate 365 provides a ligand contact to Ni(2+).

This sequence belongs to the metallo-dependent hydrolases superfamily. Urease alpha subunit family. As to quaternary structure, heterotrimer of UreA (gamma), UreB (beta) and UreC (alpha) subunits. Three heterotrimers associate to form the active enzyme. Requires Ni cation as cofactor. In terms of processing, carboxylation allows a single lysine to coordinate two nickel ions.

The protein localises to the cytoplasm. It catalyses the reaction urea + 2 H2O + H(+) = hydrogencarbonate + 2 NH4(+). It functions in the pathway nitrogen metabolism; urea degradation; CO(2) and NH(3) from urea (urease route): step 1/1. The polypeptide is Urease subunit alpha (Paracidovorax citrulli (strain AAC00-1) (Acidovorax citrulli)).